We begin with the raw amino-acid sequence, 144 residues long: Large ribosomal subunit protein uL15 (144 aa).

Residues 1 to 49 are disordered; that stretch reads MRLNTLSPAAGAKSAAKRVGRGIGSGTGKTCGRGHKGQKSRSGGGVRVG. The span at 21–31 shows a compositional bias: gly residues; that stretch reads RGIGSGTGKTC.

The protein belongs to the universal ribosomal protein uL15 family. In terms of assembly, part of the 50S ribosomal subunit.

Functionally, binds to the 23S rRNA. The chain is Large ribosomal subunit protein uL15 from Shewanella sediminis (strain HAW-EB3).